A 374-amino-acid chain; its full sequence is Protein A6 homolog (374 aa).

Belongs to the chordopoxvirinae A6 family.

It localises to the virion. In terms of biological role, plays an essential role in immature virion (IV) to mature virion (MV) transition. The protein is Protein A6 homolog of Vertebrata (FPV).